Consider the following 425-residue polypeptide: UPF0761 membrane protein XCV0968 (425 aa).

6 helical membrane passes run 48–68 (VFAL…FPAF), 105–125 (FTVA…HSIE), 154–174 (GTML…LPLF), 182–202 (LAEF…IVLI), 216–236 (ALPG…GFGF), and 250–270 (ALSA…SVLL).

The protein belongs to the UPF0761 family.

The protein localises to the cell inner membrane. In Xanthomonas euvesicatoria pv. vesicatoria (strain 85-10) (Xanthomonas campestris pv. vesicatoria), this protein is UPF0761 membrane protein XCV0968.